The primary structure comprises 772 residues: Carnitine O-palmitoyltransferase 1, muscle isoform (772 aa).

The Cytoplasmic segment spans residues methionine 1–lysine 47. The chain crosses the membrane as a helical span at residues asparagine 48–serine 73. The Mitochondrial intermembrane portion of the chain corresponds to tyrosine 74–glutamine 102. The chain crosses the membrane as a helical span at residues threonine 103–phenylalanine 122. Over phenylalanine 123–serine 772 the chain is Cytoplasmic. Histidine 473 serves as the catalytic Proton acceptor. Glycine 555–aspartate 567 serves as a coordination point for CoA. Residues tyrosine 589 and threonine 602 each contribute to the (R)-carnitine site.

The protein belongs to the carnitine/choline acetyltransferase family.

It localises to the mitochondrion outer membrane. It catalyses the reaction (R)-carnitine + hexadecanoyl-CoA = O-hexadecanoyl-(R)-carnitine + CoA. It functions in the pathway lipid metabolism; fatty acid beta-oxidation. Catalyzes the transfer of the acyl group of long-chain fatty acid-CoA conjugates onto carnitine, an essential step for the mitochondrial uptake of long-chain fatty acids and their subsequent beta-oxidation in the mitochondrion. This Sus scrofa (Pig) protein is Carnitine O-palmitoyltransferase 1, muscle isoform (CPT1B).